Reading from the N-terminus, the 163-residue chain is Small ribosomal subunit protein bS18c (163 aa).

Disordered regions lie at residues 1 to 52 (MYIS…IGPG) and 144 to 163 (NLRN…SSDC). Over residues 7–48 (PFRKSKQPFRKSKQTFHKSKQPFRKFKQPFRKSKQPFRRRSR) the composition is skewed to basic residues.

It belongs to the bacterial ribosomal protein bS18 family. Part of the 30S ribosomal subunit.

The protein resides in the plastid. It is found in the chloroplast. In Sorghum bicolor (Sorghum), this protein is Small ribosomal subunit protein bS18c.